We begin with the raw amino-acid sequence, 239 residues long: Type III pantothenate kinase (239 aa).

6-13 contacts ATP; the sequence is DAGNTRLK. Substrate is bound by residues tyrosine 87 and 94–97; that span reads GADR. Catalysis depends on aspartate 96, which acts as the Proton acceptor. Residue threonine 119 coordinates ATP. A substrate-binding site is contributed by serine 169.

Belongs to the type III pantothenate kinase family. As to quaternary structure, homodimer. Requires NH4(+) as cofactor. The cofactor is K(+).

Its subcellular location is the cytoplasm. The enzyme catalyses (R)-pantothenate + ATP = (R)-4'-phosphopantothenate + ADP + H(+). Its pathway is cofactor biosynthesis; coenzyme A biosynthesis; CoA from (R)-pantothenate: step 1/5. Its function is as follows. Catalyzes the phosphorylation of pantothenate (Pan), the first step in CoA biosynthesis. This is Type III pantothenate kinase from Laribacter hongkongensis (strain HLHK9).